A 541-amino-acid chain; its full sequence is Chaperonin GroEL 1 (541 aa).

Residues Thr-29–Pro-32, Asp-86–Thr-90, Gly-413, Asn-477–Ala-479, and Asp-493 contribute to the ATP site.

Belongs to the chaperonin (HSP60) family. As to quaternary structure, forms a cylinder of 14 subunits composed of two heptameric rings stacked back-to-back. Interacts with the co-chaperonin GroES.

The protein localises to the cytoplasm. It carries out the reaction ATP + H2O + a folded polypeptide = ADP + phosphate + an unfolded polypeptide.. In terms of biological role, together with its co-chaperonin GroES, plays an essential role in assisting protein folding. The GroEL-GroES system forms a nano-cage that allows encapsulation of the non-native substrate proteins and provides a physical environment optimized to promote and accelerate protein folding. In Paenarthrobacter aurescens (strain TC1), this protein is Chaperonin GroEL 1.